The following is a 388-amino-acid chain: Succinate--CoA ligase [ADP-forming] subunit beta (388 aa).

In terms of domain architecture, ATP-grasp spans 9–244 (KEILRKFGVA…LDEEDPAEIE (236 aa)). Residues K46, 53 to 55 (GRG), E99, A102, and E107 contribute to the ATP site. The Mg(2+) site is built by N199 and D213. Residues N264 and 321–323 (GIM) each bind substrate.

It belongs to the succinate/malate CoA ligase beta subunit family. As to quaternary structure, heterotetramer of two alpha and two beta subunits. It depends on Mg(2+) as a cofactor.

It carries out the reaction succinate + ATP + CoA = succinyl-CoA + ADP + phosphate. It catalyses the reaction GTP + succinate + CoA = succinyl-CoA + GDP + phosphate. The protein operates within carbohydrate metabolism; tricarboxylic acid cycle; succinate from succinyl-CoA (ligase route): step 1/1. Succinyl-CoA synthetase functions in the citric acid cycle (TCA), coupling the hydrolysis of succinyl-CoA to the synthesis of either ATP or GTP and thus represents the only step of substrate-level phosphorylation in the TCA. The beta subunit provides nucleotide specificity of the enzyme and binds the substrate succinate, while the binding sites for coenzyme A and phosphate are found in the alpha subunit. The sequence is that of Succinate--CoA ligase [ADP-forming] subunit beta from Burkholderia ambifaria (strain MC40-6).